Reading from the N-terminus, the 891-residue chain is Transportin-1 (891 aa).

HEAT repeat units follow at residues glycine 14 to glutamine 40, phenylalanine 45 to serine 83, tyrosine 92 to valine 125, leucine 131 to aspartate 168, asparagine 178 to valine 208, tyrosine 221 to isoleucine 248, lysine 260 to alanine 287, proline 303 to valine 381, threonine 389 to alanine 420, proline 432 to arginine 459, phenylalanine 477 to alanine 510, leucine 518 to valine 551, lysine 559 to glycine 597, glutamate 605 to alanine 653, leucine 664 to proline 695, glutamine 703 to glycine 740, isoleucine 748 to proline 784, aspartate 792 to asparagine 825, and threonine 834 to leucine 866. Residues isoleucine 35–alanine 103 form the Importin N-terminal domain. Residues aspartate 317 to serine 330 are compositionally biased toward acidic residues. Residues aspartate 317 to aspartate 337 are disordered.

It belongs to the importin beta family. Importin beta-2 subfamily.

Its subcellular location is the cytoplasm. It localises to the nucleus. It is found in the nucleoplasm. Its function is as follows. Functions in nuclear protein import as nuclear transport receptor. Serves as receptor for nuclear localization signals (NLS) in cargo substrates. Is thought to mediate docking of the importin/substrate complex to the nuclear pore complex (NPC) through binding to nucleoporin and the complex is subsequently translocated through the pore by an energy requiring, Ran-dependent mechanism. At the nucleoplasmic side of the NPC, Ran binds to the importin, the importin/substrate complex dissociates and importin is re-exported from the nucleus to the cytoplasm where GTP hydrolysis releases Ran. The directionality of nuclear import is thought to be conferred by an asymmetric distribution of the GTP- and GDP-bound forms of Ran between the cytoplasm and nucleus. This chain is Transportin-1 (TRN1), found in Oryza sativa subsp. japonica (Rice).